The primary structure comprises 122 residues: Large ribosomal subunit protein uL14 (122 aa).

This sequence belongs to the universal ribosomal protein uL14 family. In terms of assembly, part of the 50S ribosomal subunit. Forms a cluster with proteins L3 and L19. In the 70S ribosome, L14 and L19 interact and together make contacts with the 16S rRNA in bridges B5 and B8.

In terms of biological role, binds to 23S rRNA. Forms part of two intersubunit bridges in the 70S ribosome. This Nitrobacter winogradskyi (strain ATCC 25391 / DSM 10237 / CIP 104748 / NCIMB 11846 / Nb-255) protein is Large ribosomal subunit protein uL14.